The chain runs to 390 residues: Elongation factor Tu 2 (390 aa).

Residues 10 to 203 (KPHLNIGTMG…AVDTYVPMPE (194 aa)) form the tr-type G domain. The G1 stretch occupies residues 19–26 (GHVDHGKT). 19-26 (GHVDHGKT) lines the GTP pocket. Threonine 26 contributes to the Mg(2+) binding site. Residues 60–64 (GITIN) form a G2 region. Positions 81 to 84 (DMPG) are G3. Residues 81-85 (DMPGH) and 136-139 (NKAD) contribute to the GTP site. Positions 136–139 (NKAD) are G4. The segment at 173–175 (SGL) is G5.

This sequence belongs to the TRAFAC class translation factor GTPase superfamily. Classic translation factor GTPase family. EF-Tu/EF-1A subfamily. As to quaternary structure, monomer.

The protein localises to the cytoplasm. The enzyme catalyses GTP + H2O = GDP + phosphate + H(+). GTP hydrolase that promotes the GTP-dependent binding of aminoacyl-tRNA to the A-site of ribosomes during protein biosynthesis. This is Elongation factor Tu 2 from Streptomyces avermitilis (strain ATCC 31267 / DSM 46492 / JCM 5070 / NBRC 14893 / NCIMB 12804 / NRRL 8165 / MA-4680).